The chain runs to 296 residues: Acetylglutamate kinase (296 aa).

Substrate-binding positions include 69–70, Arg-91, and Asn-192; that span reads GG.

Belongs to the acetylglutamate kinase family. ArgB subfamily.

It is found in the cytoplasm. The enzyme catalyses N-acetyl-L-glutamate + ATP = N-acetyl-L-glutamyl 5-phosphate + ADP. Its pathway is amino-acid biosynthesis; L-arginine biosynthesis; N(2)-acetyl-L-ornithine from L-glutamate: step 2/4. Its function is as follows. Catalyzes the ATP-dependent phosphorylation of N-acetyl-L-glutamate. This chain is Acetylglutamate kinase, found in Ruthia magnifica subsp. Calyptogena magnifica.